An 827-amino-acid polypeptide reads, in one-letter code: Striatin homolog (827 aa).

A coiled-coil region spans residues 37-109; sequence RAHWISEKAE…VEEEEEEDDK (73 aa). Disordered stretches follow at residues 99–123, 181–270, 311–362, and 400–459; these read KVEE…SKDN, KDIN…QLQS, SSVS…DEQS, and EEGN…SELM. Over residues 109 to 123 the composition is skewed to basic and acidic residues; that stretch reads KIPKNREPPKKSKDN. Low complexity-rich tracts occupy residues 184-270 and 311-334; these read NNNN…QLQS and SSVS…TSKQ. Residues 337–346 are compositionally biased toward polar residues; sequence EDPNNVTISK. 3 stretches are compositionally biased toward low complexity: residues 347-356, 416-432, and 439-453; these read QQQQEQQQQQ, TPTT…STGS, and SSSS…NSNT. WD repeat units follow at residues 495–534, 548–593, 610–649, 709–748, 751–790, and 797–827; these read SHFD…PTKK, GHTG…IDSY, GHQD…QLYT, NNNS…VVHS, AHSN…CIQD, and KYDE…RILN.

The protein belongs to the WD repeat striatin family. As to quaternary structure, part of the core of STRIPAK complexes.

The protein localises to the cytoplasm. It is found in the membrane. Calmodulin-binding scaffolding protein which is the center of the striatin-interacting phosphatase and kinase (STRIPAK) complexes. STRIPAK complexes have critical roles in protein (de)phosphorylation and are regulators of multiple signaling pathways including Hippo, MAPK, nuclear receptor and cytoskeleton remodeling. Different types of STRIPAK complexes are involved in a variety of biological processes such as cell growth, differentiation, apoptosis, metabolism and immune regulation. This is Striatin homolog (strn) from Dictyostelium discoideum (Social amoeba).